A 148-amino-acid chain; its full sequence is Large ribosomal subunit protein uL15 (148 aa).

The disordered stretch occupies residues 18 to 38 (GYGRVGKHRKHPGGRGNAGGL).

The protein belongs to the universal ribosomal protein uL15 family.

This chain is Large ribosomal subunit protein uL15 (rpl27a), found in Dictyostelium discoideum (Social amoeba).